Consider the following 144-residue polypeptide: Large ribosomal subunit protein uL16 (144 aa).

It belongs to the universal ribosomal protein uL16 family. In terms of assembly, part of the 50S ribosomal subunit.

Functionally, binds 23S rRNA and is also seen to make contacts with the A and possibly P site tRNAs. In Enterococcus faecalis (strain ATCC 700802 / V583), this protein is Large ribosomal subunit protein uL16.